A 178-amino-acid polypeptide reads, in one-letter code: Protein GrpE (178 aa).

Belongs to the GrpE family. Homodimer.

Its subcellular location is the cytoplasm. Its function is as follows. Participates actively in the response to hyperosmotic and heat shock by preventing the aggregation of stress-denatured proteins, in association with DnaK and GrpE. It is the nucleotide exchange factor for DnaK and may function as a thermosensor. Unfolded proteins bind initially to DnaJ; upon interaction with the DnaJ-bound protein, DnaK hydrolyzes its bound ATP, resulting in the formation of a stable complex. GrpE releases ADP from DnaK; ATP binding to DnaK triggers the release of the substrate protein, thus completing the reaction cycle. Several rounds of ATP-dependent interactions between DnaJ, DnaK and GrpE are required for fully efficient folding. In Rickettsia akari (strain Hartford), this protein is Protein GrpE.